A 630-amino-acid chain; its full sequence is 1-deoxy-D-xylulose-5-phosphate synthase (630 aa).

Residues histidine 72 and 113-115 (GHS) each bind thiamine diphosphate. Aspartate 144 contacts Mg(2+). Thiamine diphosphate contacts are provided by residues 145 to 146 (GA), asparagine 173, tyrosine 284, and glutamate 367. Mg(2+) is bound at residue asparagine 173.

This sequence belongs to the transketolase family. DXPS subfamily. Homodimer. Requires Mg(2+) as cofactor. It depends on thiamine diphosphate as a cofactor.

The catalysed reaction is D-glyceraldehyde 3-phosphate + pyruvate + H(+) = 1-deoxy-D-xylulose 5-phosphate + CO2. It functions in the pathway metabolic intermediate biosynthesis; 1-deoxy-D-xylulose 5-phosphate biosynthesis; 1-deoxy-D-xylulose 5-phosphate from D-glyceraldehyde 3-phosphate and pyruvate: step 1/1. Catalyzes the acyloin condensation reaction between C atoms 2 and 3 of pyruvate and glyceraldehyde 3-phosphate to yield 1-deoxy-D-xylulose-5-phosphate (DXP). The chain is 1-deoxy-D-xylulose-5-phosphate synthase from Bacillus cereus (strain AH820).